Consider the following 488-residue polypeptide: MAKREHQDQTGDSRPSKKSKGTKDTKKNTEVSPPYFQSPALDNVPQTEIDKFLSDHSIKITDASADKPSLRPIISFSFLPPSNKDLYAPLDGFASPTAIQSATWPLLFAGRDVIGIAETGSGKTLAFGLPCLKKVLDLKTKQKSCRPLAVVISPTRELAMQIYDQLVKFAEKVDIQVACIFGGVKKDEQREALKSAAVVVATPGRLKDLQNDGSLDLGRVKYLVLDEADRMLDKGFEQDIKDIISPMPVSKRQTVMFTATWPPIVRNLASTFMTSPVTVTIGGDPSADPRANSRIKQVVEVVKPHEKEQRLVQILNRHQRGTPDKVLAFCLYKKEAMRVERLLRTKGFKVAGIHGDLSQQERFRSLEAFKSGAATVLVATDVAARGLDIPHVKLVVNVTFPLTVEDYVHRIGRTGRAGADGHAITLFTETDKAQSGALINVLKAANQEVPEALLKFGSTVKKKQHDAYGAFFKDVEPGKAATKIVFDD.

Residues 1–29 (MAKREHQDQTGDSRPSKKSKGTKDTKKNT) are compositionally biased toward basic and acidic residues. The disordered stretch occupies residues 1–42 (MAKREHQDQTGDSRPSKKSKGTKDTKKNTEVSPPYFQSPALD). The short motif at 92 to 100 (GFASPTAIQ) is the Q motif element. The Helicase ATP-binding domain maps to 104–279 (WPLLFAGRDV…STFMTSPVTV (176 aa)). 117 to 124 (AETGSGKT) provides a ligand contact to ATP. The DEAD box motif lies at 226–229 (DEAD). The Helicase C-terminal domain maps to 306–457 (EKEQRLVQIL…EVPEALLKFG (152 aa)).

The protein belongs to the DEAD box helicase family. DDX5/DBP2 subfamily.

The protein localises to the nucleus. It is found in the nucleolus. The enzyme catalyses ATP + H2O = ADP + phosphate + H(+). Its function is as follows. ATP-dependent RNA helicase required for 60S ribosomal subunit synthesis. Involved in efficient pre-rRNA processing, predominantly at site A3, which is necessary for the normal formation of 25S and 5.8S rRNAs. This is ATP-dependent RNA helicase dbp3 (dbp3) from Emericella nidulans (strain FGSC A4 / ATCC 38163 / CBS 112.46 / NRRL 194 / M139) (Aspergillus nidulans).